A 553-amino-acid chain; its full sequence is Putative transport protein YidE (553 aa).

The next 5 membrane-spanning stretches (helical) occupy residues 4–24, 28–48, 65–85, 95–115, and 158–178; these read IALTVSVLALVAVVGLWIGNI, GVGFGIGGVLFGGIIVGHFVD, FGLILFVYTIGIQVGPGFFAS, LFAVLIVIMGGLVTAILHKIF, and MSYAMAYPFGICGILLTMWLM. 2 RCK C-terminal domains span residues 192-276 and 279-361; these read KHES…VIGK and DTSL…VVGN. The next 6 membrane-spanning stretches (helical) occupy residues 371 to 391, 393 to 413, 437 to 457, 464 to 484, 493 to 513, and 533 to 553; these read MLPVFIGIGLGVLLGSIPLFV, GFPVALKLGLAGGPLIMALIL, LGIVLFLAVVGLKSGGDFVDT, LSWIGYGIFITAIPLITVGLL, YLTLCGMLAGSMTDPPALAFA, and LVMFLRIITPQLLAVIFWGMG.

It belongs to the AAE transporter (TC 2.A.81) family. YidE subfamily.

It localises to the cell membrane. In Salmonella newport (strain SL254), this protein is Putative transport protein YidE.